The primary structure comprises 252 residues: Large ribosomal subunit protein uL4 (252 aa).

This sequence belongs to the universal ribosomal protein uL4 family. In terms of assembly, part of the 50S ribosomal subunit.

One of the primary rRNA binding proteins, this protein initially binds near the 5'-end of the 23S rRNA. It is important during the early stages of 50S assembly. It makes multiple contacts with different domains of the 23S rRNA in the assembled 50S subunit and ribosome. In terms of biological role, forms part of the polypeptide exit tunnel. The protein is Large ribosomal subunit protein uL4 of Methanococcus maripaludis (strain C7 / ATCC BAA-1331).